We begin with the raw amino-acid sequence, 1023 residues long: Probable beta-glucosidase E (1023 aa).

The tract at residues 1-51 (MPKSYTPVHDSIPEEDHFSSDDESNFRLHRIDRSASRSQSPKENEGEPSIL) is disordered. Over 1-128 (MPKSYTPVHD…AVYYSKTWWR (128 aa)) the chain is Cytoplasmic. Residues 11 to 45 (SIPEEDHFSSDDESNFRLHRIDRSASRSQSPKENE) are compositionally biased toward basic and acidic residues. A helical; Signal-anchor for type II membrane protein transmembrane segment spans residues 129–149 (TLVVVIIALGLLVWGFLKYAS). Over 150-1023 (TRGDIWEEYD…NLPLGKPFDP (874 aa)) the chain is Extracellular. N-linked (GlcNAc...) asparagine glycans are attached at residues Asn199 and Asn387. Asp415 is an active-site residue. N-linked (GlcNAc...) asparagine glycosylation is found at Asn458 and Asn497. 2 disordered regions span residues 485–515 (WESP…GSPG) and 822–841 (NPSR…PSYD). A compositionally biased stretch (low complexity) spans 827–838 (PAARPPDAVAPP). A glycan (N-linked (GlcNAc...) asparagine) is linked at Asn848. The tract at residues 873–909 (ATTPPPPNPEASGSATDQKPHRTKPSDAGGGAGGNPS) is disordered. N-linked (GlcNAc...) asparagine glycosylation is found at Asn964 and Asn979.

This sequence belongs to the glycosyl hydrolase 3 family.

The protein localises to the cell membrane. It catalyses the reaction Hydrolysis of terminal, non-reducing beta-D-glucosyl residues with release of beta-D-glucose.. It functions in the pathway glycan metabolism; cellulose degradation. Functionally, beta-glucosidases are one of a number of cellulolytic enzymes involved in the degradation of cellulosic biomass. Catalyzes the last step releasing glucose from the inhibitory cellobiose. This chain is Probable beta-glucosidase E (bglE), found in Emericella nidulans (strain FGSC A4 / ATCC 38163 / CBS 112.46 / NRRL 194 / M139) (Aspergillus nidulans).